A 498-amino-acid chain; its full sequence is Pyruvate kinase (498 aa).

Arg-53 is a binding site for substrate. Residues Asn-55, Ser-57, Asp-87, and Thr-88 each coordinate K(+). Residue 55-58 coordinates ATP; it reads NFSH. Positions 94 and 178 each coordinate ATP. Glu-240 contacts Mg(2+). Substrate is bound by residues Gly-263, Asp-264, and Thr-296. Asp-264 lines the Mg(2+) pocket.

The protein belongs to the pyruvate kinase family. As to quaternary structure, homotetramer. Requires Mg(2+) as cofactor. K(+) serves as cofactor.

It catalyses the reaction pyruvate + ATP = phosphoenolpyruvate + ADP + H(+). It participates in carbohydrate degradation; glycolysis; pyruvate from D-glyceraldehyde 3-phosphate: step 5/5. This Trypanoplasma borreli protein is Pyruvate kinase (PYK).